The sequence spans 192 residues: UPF0149 protein YgfB (192 aa).

The protein belongs to the UPF0149 family.

This is UPF0149 protein YgfB from Salmonella typhi.